We begin with the raw amino-acid sequence, 215 residues long: Protein GET1 (215 aa).

Residues M1–L4 are Lumenal-facing. A helical membrane pass occupies residues L5 to A24. Topologically, residues T25–R110 are cytoplasmic. A coiled-coil region spans residues A72–K104. Residues W111–F131 form a helical membrane-spanning segment. The Lumenal segment spans residues W132–S155. Residues V156 to I172 form a helical membrane-spanning segment. The Cytoplasmic portion of the chain corresponds to K173–L215.

This sequence belongs to the WRB/GET1 family. In terms of assembly, interacts with GET3.

The protein localises to the endoplasmic reticulum membrane. Required for the post-translational delivery of tail-anchored (TA) proteins to the endoplasmic reticulum. Acts as a membrane receptor for soluble GET3, which recognizes and selectively binds the transmembrane domain of TA proteins in the cytosol. The protein is Protein GET1 of Pyricularia oryzae (strain 70-15 / ATCC MYA-4617 / FGSC 8958) (Rice blast fungus).